Consider the following 409-residue polypeptide: N-acetylglucosamine-6-phosphate deacetylase (409 aa).

Glu143 serves as a coordination point for a divalent metal cation. 154–155 (AH) is a binding site for substrate. A divalent metal cation is bound by residues His211 and His232. Residues 235–236 (NA), Arg243, and 269–272 (DGIH) each bind substrate. Residue Asp294 is the Proton donor/acceptor of the active site. 328–330 (LSG) lines the substrate pocket.

Belongs to the metallo-dependent hydrolases superfamily. NagA family. It depends on a divalent metal cation as a cofactor.

It carries out the reaction N-acetyl-D-glucosamine 6-phosphate + H2O = D-glucosamine 6-phosphate + acetate. It participates in amino-sugar metabolism; N-acetylneuraminate degradation. Its function is as follows. Hydrolyzes the N-glycolyl group from N-glycolylglucosamine 6-phosphate (GlcNGc-6-P) in the N-glycolylneuraminic acid (Neu5Gc) degradation pathway. This Rattus norvegicus (Rat) protein is N-acetylglucosamine-6-phosphate deacetylase (Amdhd2).